The primary structure comprises 185 residues: MIPRVFIYRLPQDDPRKNTAIKLVRFGFAQLVDSIKALPSGSIILDPTVKTPLTPSDRVIAESRGLSLIDCSWKRAVDVHTKFIRGKFIRRRLPLLIAANPTHYGKPYILSTIEAVAAALYIMGFKDEAMEVLRLYKWGPNFIIINQKYLERYAAGDLSPERELLGVDDVDNGLEQLMRVLTNGD.

Residues T19, I69, L93, Y108, and T112 each contribute to the S-adenosyl-L-methionine site.

Belongs to the TDD superfamily. TSR3 family.

It is found in the cytoplasm. The catalysed reaction is an N(1)-methylpseudouridine in rRNA + S-adenosyl-L-methionine = N(1)-methyl-N(3)-[(3S)-3-amino-3-carboxypropyl]pseudouridine in rRNA + S-methyl-5'-thioadenosine + H(+). Aminocarboxypropyltransferase that catalyzes the aminocarboxypropyl transfer on pseudouridine corresponding to position 914 in M.jannaschii 16S rRNA. It constitutes the last step in biosynthesis of the hypermodified N1-methyl-N3-(3-amino-3-carboxypropyl) pseudouridine (m1acp3-Psi). This Vulcanisaeta distributa (strain DSM 14429 / JCM 11212 / NBRC 100878 / IC-017) protein is 16S rRNA aminocarboxypropyltransferase.